A 629-amino-acid chain; its full sequence is tRNA uridine 5-carboxymethylaminomethyl modification enzyme MnmG (629 aa).

Gly4–Gly9 is an FAD binding site. Gly268–Phe282 contributes to the NAD(+) binding site.

This sequence belongs to the MnmG family. Homodimer. Heterotetramer of two MnmE and two MnmG subunits. FAD is required as a cofactor.

The protein resides in the cytoplasm. NAD-binding protein involved in the addition of a carboxymethylaminomethyl (cmnm) group at the wobble position (U34) of certain tRNAs, forming tRNA-cmnm(5)s(2)U34. The polypeptide is tRNA uridine 5-carboxymethylaminomethyl modification enzyme MnmG (Helicobacter hepaticus (strain ATCC 51449 / 3B1)).